We begin with the raw amino-acid sequence, 814 residues long: Lon protease 1 (814 aa).

Basic and acidic residues predominate over residues 1–17 (MTDDRDKTNEDPEKIIE). Positions 1 to 28 (MTDDRDKTNEDPEKIIEADFNPEDPDDA) are disordered. The Lon N-terminal domain occupies 49 to 245 (LPIIPLRPRP…KVLVLLKKEL (197 aa)). 398-405 (GPPGVGKT) is a binding site for ATP. The Lon proteolytic domain maps to 633-814 (EDVPGVVTGL…YRDVYQVAFG (182 aa)). Active-site residues include Ser721 and Lys764.

Belongs to the peptidase S16 family. As to quaternary structure, homohexamer. Organized in a ring with a central cavity.

It is found in the cytoplasm. It carries out the reaction Hydrolysis of proteins in presence of ATP.. Its function is as follows. ATP-dependent serine protease that mediates the selective degradation of mutant and abnormal proteins as well as certain short-lived regulatory proteins. Required for cellular homeostasis and for survival from DNA damage and developmental changes induced by stress. Degrades polypeptides processively to yield small peptide fragments that are 5 to 10 amino acids long. Binds to DNA in a double-stranded, site-specific manner. This is Lon protease 1 from Syntrophotalea carbinolica (strain DSM 2380 / NBRC 103641 / GraBd1) (Pelobacter carbinolicus).